Reading from the N-terminus, the 399-residue chain is MAQPVWAGVDAGKADHYCMVINDDAQRLLSQRVANDEAALLELIAAVTTLADGGEVTWAIDLNAGGAALLIALLIAAGQRLLYIPGRTVHHAAGSYRGEGKTDAKDAAIIADQARMRHDLQPLRAGDDIAVELRILTSRRSDLVADRTRAIEPNARPAAGILSALERAFDYNKSRAALILLTGYQTPDALRSAGGARVAAFLRKRKARNADTVAATALQAANAQHSIVPGQQLAATVVARLAKEVMALDTEIGDTDAMIEERFRRHRHAEIILSMPGFGVILGAEFLAATGGDMAAFASADRLAGVAGLAPVPRDSGRISGNLKRPRRYDRRLLRACYLSALVSIRTDPSSRTYYDRKRTEGKRHTQAVLALARRRLNVLWAMLRDHAVYHPATTTAAA.

Belongs to the transposase IS1111A/IS1328/IS1533 family.

The sequence is that of Insertion element IS900 uncharacterized 42 kDa protein from Mycobacterium paratuberculosis.